The chain runs to 537 residues: Glutamyl-tRNA reductase, chloroplastic (537 aa).

The N-terminal 48 residues, M1–R48, are a transit peptide targeting the chloroplast. Substrate contacts are provided by residues T134–R137, S194, E199–Q201, and Q205. C135 acts as the Nucleophile in catalysis. G276 to G281 is a binding site for NADP(+).

It belongs to the glutamyl-tRNA reductase family.

It is found in the plastid. Its subcellular location is the chloroplast. The enzyme catalyses (S)-4-amino-5-oxopentanoate + tRNA(Glu) + NADP(+) = L-glutamyl-tRNA(Glu) + NADPH + H(+). It participates in porphyrin-containing compound metabolism; protoporphyrin-IX biosynthesis; 5-aminolevulinate from L-glutamyl-tRNA(Glu): step 1/2. Its function is as follows. Catalyzes the NADPH-dependent reduction of glutamyl-tRNA(Glu) to glutamate 1-semialdehyde (GSA). This is Glutamyl-tRNA reductase, chloroplastic from Oryza sativa subsp. indica (Rice).